Reading from the N-terminus, the 269-residue chain is 5'-nucleotidase SurE (269 aa).

4 residues coordinate a divalent metal cation: aspartate 11, aspartate 12, serine 43, and asparagine 101.

The protein belongs to the SurE nucleotidase family. A divalent metal cation serves as cofactor.

The protein localises to the cytoplasm. It carries out the reaction a ribonucleoside 5'-phosphate + H2O = a ribonucleoside + phosphate. In terms of biological role, nucleotidase that shows phosphatase activity on nucleoside 5'-monophosphates. This chain is 5'-nucleotidase SurE, found in Synechococcus sp. (strain CC9605).